We begin with the raw amino-acid sequence, 1129 residues long: Tyrosine-protein kinase JAK2 (1129 aa).

The FERM domain occupies 35–378 (PLLQVYLYYS…GYYRLTADAH (344 aa)). Y117 is subject to Phosphotyrosine; by autocatalysis. The SH2; atypical domain occupies 399-480 (HGPIFMDFAI…NLKDLLTCYQ (82 aa)). Protein kinase domains are found at residues 542-806 (LIFE…NSLF) and 846-1118 (LKFL…DLAQ). 852–860 (LGKGNFGSV) contacts ATP. Position 865 is a phosphotyrosine; by autocatalysis (Y865). Residue K879 coordinates ATP. Y963 and Y969 each carry phosphotyrosine; by autocatalysis. Residue D973 is the Proton acceptor of the active site. Phosphotyrosine; by autocatalysis is present on residues Y1004 and Y1005.

It belongs to the protein kinase superfamily. Tyr protein kinase family. JAK subfamily. Post-translationally, autophosphorylated, leading to regulate its activity.

Its subcellular location is the endomembrane system. It localises to the nucleus. The catalysed reaction is L-tyrosyl-[protein] + ATP = O-phospho-L-tyrosyl-[protein] + ADP + H(+). Its activity is regulated as follows. Regulated by autophosphorylation, can both activate or decrease activity. Heme regulates its activity by enhancing the phosphorylation on Tyr-1004 and Tyr-1005. In terms of biological role, non-receptor tyrosine kinase involved in various processes such as cell growth, development, differentiation or histone modifications. Mediates essential signaling events in both innate and adaptive immunity. In the cytoplasm, plays a pivotal role in signal transduction via its association with cytokine receptors. Following ligand-binding to cell surface receptors, phosphorylates specific tyrosine residues on the cytoplasmic tails of the receptor, creating docking sites for STATs proteins. Subsequently, phosphorylates the STATs proteins once they are recruited to the receptor. Phosphorylated STATs then form homodimer or heterodimers and translocate to the nucleus to activate gene transcription. For example, cell stimulation with erythropoietin (EPO) during erythropoiesis leads to JAK2 autophosphorylation, activation, and its association with erythropoietin receptor (EPOR) that becomes phosphorylated in its cytoplasmic domain. Then, STAT5 (STAT5A or STAT5B) is recruited, phosphorylated and activated by JAK2. Once activated, dimerized STAT5 translocates into the nucleus and promotes the transcription of several essential genes involved in the modulation of erythropoiesis. Part of a signaling cascade that is activated by increased cellular retinol and that leads to the activation of STAT5 (STAT5A or STAT5B). In the nucleus, plays a key role in chromatin by specifically mediating phosphorylation of 'Tyr-41' of histone H3 (H3Y41ph), a specific tag that promotes exclusion of CBX5 (HP1 alpha) from chromatin. Up-regulates the potassium voltage-gated channel activity of KCNA3. The polypeptide is Tyrosine-protein kinase JAK2 (Gallus gallus (Chicken)).